We begin with the raw amino-acid sequence, 290 residues long: uncharacterized protein (290 aa).

The 237-residue stretch at 2 to 238 (LKTENLSVGY…EIVNELYDLK (237 aa)) folds into the ABC transporter domain. An ATP-binding site is contributed by 34–41 (GPNGAGKS).

It belongs to the ABC transporter superfamily.

This is an uncharacterized protein from Methanocaldococcus jannaschii (strain ATCC 43067 / DSM 2661 / JAL-1 / JCM 10045 / NBRC 100440) (Methanococcus jannaschii).